A 203-amino-acid polypeptide reads, in one-letter code: Thymidylate kinase (203 aa).

7–14 contributes to the ATP binding site; the sequence is GPDGSGKS.

This sequence belongs to the thymidylate kinase family.

It catalyses the reaction dTMP + ATP = dTDP + ADP. Functionally, phosphorylation of dTMP to form dTDP in both de novo and salvage pathways of dTTP synthesis. The sequence is that of Thymidylate kinase from Finegoldia magna (strain ATCC 29328 / DSM 20472 / WAL 2508) (Peptostreptococcus magnus).